A 645-amino-acid polypeptide reads, in one-letter code: MSLNFSQKNAVELTNGPCLILAGAGSGKTKVIINKIIYLINHCQYEPDNIAAVTFTNKAAYEMRIRLSKYLNIPEIKKIIISTFHSLGLEIIKKEIDALELNNNFTLLDEKDQILLLKKICKKEIKNNIQLLKKLNFMISYWKNKFLTPLQVQLLAKSSQEKDFAYVYEQYTNYLYKANILDFDDLICMPTLLLKNNKKIKIRWQKKISYLLVDEYQDTNNSQYELIKMLANKNSDFTLVGDDDQSIYSWRGANPQNIFLLKKDFPNLKIIKMEHNYRSSGRILKAANSLIANNIHYLEKKLFSQLKYGNLIKVLIGKNEENEAQKIVKKIISQYAKKKIKYRDFAILYRGNYQSRILEKALIKENIPYNISEKSSFFSRPEIKDLLSYLRVVINRDDNHAFMRIVNIPSRQIGKTTLKKLEEWANKKHVSLFQASNNIEIKKFLNENTIKKIKNFISKIEKFTAWSCLKPSNIIDDIVDDLEYEKWLSKFLKDPNKIKNSINNVHTLSQWFKNMIKGDDFEKPMTLFQIVTRMTIRDILDDNIIKEQQDRVQLMTLHASKGLEFPAVFIIGMCEGILPNQKSIDNDNIEEERRLTYVGITRAKKQLFFTYCYKRTQYGQILDMLPSRFLFELPQEDLKWEKKIF.

Positions 1-280 constitute a UvrD-like helicase ATP-binding domain; sequence MSLNFSQKNA…IKMEHNYRSS (280 aa). ATP is bound by residues 22-29 and R278; that span reads AGAGSGKT. The 282-residue stretch at 281-562 folds into the UvrD-like helicase C-terminal domain; sequence GRILKAANSL…QLMTLHASKG (282 aa).

Belongs to the helicase family. UvrD subfamily. In terms of assembly, homodimer.

The enzyme catalyses Couples ATP hydrolysis with the unwinding of duplex DNA by translocating in the 3'-5' direction.. It carries out the reaction ATP + H2O = ADP + phosphate + H(+). In terms of biological role, rep helicase is a single-stranded DNA-dependent ATPase involved in DNA replication; it can initiate unwinding at a nick in the DNA. It binds to the single-stranded DNA and acts in a progressive fashion along the DNA in the 3' to 5' direction. The sequence is that of ATP-dependent DNA helicase Rep from Buchnera aphidicola subsp. Acyrthosiphon pisum (strain APS) (Acyrthosiphon pisum symbiotic bacterium).